The chain runs to 90 residues: Small ribosomal subunit protein uS17 (90 aa).

Belongs to the universal ribosomal protein uS17 family. In terms of assembly, part of the 30S ribosomal subunit.

Its function is as follows. One of the primary rRNA binding proteins, it binds specifically to the 5'-end of 16S ribosomal RNA. This is Small ribosomal subunit protein uS17 from Dehalococcoides mccartyi (strain ATCC BAA-2100 / JCM 16839 / KCTC 5957 / BAV1).